The primary structure comprises 48 residues: Large ribosomal subunit protein bL36c (48 aa).

Belongs to the bacterial ribosomal protein bL36 family.

It is found in the plastid. The protein localises to the chloroplast. The sequence is that of Large ribosomal subunit protein bL36c (rpl36) from Guillardia theta (Cryptophyte).